The chain runs to 337 residues: Protein EXORDIUM-like 3 (337 aa).

The N-terminal stretch at 1–25 (MHSLPVNLVLTVLTVFLTSPAQVIG) is a signal peptide. N-linked (GlcNAc...) asparagine glycosylation is found at Asn34, Asn66, and Asn119.

Belongs to the EXORDIUM family.

It localises to the secreted. Its subcellular location is the extracellular space. The protein resides in the apoplast. In terms of biological role, may play a role in a brassinosteroid-dependent regulation of growth and development. This chain is Protein EXORDIUM-like 3 (EXL3), found in Arabidopsis thaliana (Mouse-ear cress).